A 528-amino-acid polypeptide reads, in one-letter code: MSQSSSDGQRQPAIVILDFGSQYSELIARRVRETEVFSVVLGYSTSAEELRAMQPKGIVLSGGPSSVYAEHAPLCDPAIWELGIPVLGVCYGMQLMVQQLGGVVEAASGKAEYGKAPLEVDDPTDLLTNVTGGSTMWMSHGDSVKALPEGFVRLAHTANTPEAAVAHLQRRLYGVQFHPEVVHSTCGMALIRNFVYHICGCEPDWTTSAFIDEAVAVVREQVGEKRVLLALSGGVDSSTLAFLLKKAIGDQLTCMFIDQGFMRKGEPEFLMDFFDRKFNIHVEYINARQRFISKLKGITDPEEKRKIIGTEFIRVFEEESKRLGPFDYLAQGTLYPDVIESAGTNVDPKTGERVAVKIKSHHNVGGLPKDLQFKLVEPLRKLFKDEVRKVGRALGLPEEIVRRHPFPGPGLAIRILGEVTDEKLNCLRDADLIVREEIREAGLYHEIWQAFAVLLPVRSVGVMGDKRTYAWPIVLRCVSSEDGMTADWSRLPYDLMETISNRIVNEVKGVNRVVLDITSKPPGTIEWE.

In terms of domain architecture, Glutamine amidotransferase type-1 spans 13-204; it reads AIVILDFGSQ…VYHICGCEPD (192 aa). The active-site Nucleophile is cysteine 90. Residues histidine 178 and glutamate 180 contribute to the active site. Residues 205–403 form the GMPS ATP-PPase domain; the sequence is WTTSAFIDEA…LGLPEEIVRR (199 aa). An ATP-binding site is contributed by 232–238; the sequence is SGGVDSS.

Homodimer.

It catalyses the reaction XMP + L-glutamine + ATP + H2O = GMP + L-glutamate + AMP + diphosphate + 2 H(+). It functions in the pathway purine metabolism; GMP biosynthesis; GMP from XMP (L-Gln route): step 1/1. Functionally, catalyzes the synthesis of GMP from XMP. The chain is GMP synthase [glutamine-hydrolyzing] from Parasynechococcus marenigrum (strain WH8102).